Consider the following 411-residue polypeptide: CCA-adding enzyme (411 aa).

Positions 8 and 11 each coordinate ATP. Gly8 and Arg11 together coordinate CTP. Glu21 and Asp23 together coordinate Mg(2+). The ATP site is built by Arg91, Arg137, and Arg140. Residues Arg91, Arg137, and Arg140 each contribute to the CTP site. An HD domain is found at 227-328 (LGNQTMTRLS…MTIFQAFDCW (102 aa)).

This sequence belongs to the tRNA nucleotidyltransferase/poly(A) polymerase family. Bacterial CCA-adding enzyme type 2 subfamily. The cofactor is Mg(2+).

The enzyme catalyses a tRNA precursor + 2 CTP + ATP = a tRNA with a 3' CCA end + 3 diphosphate. It carries out the reaction a tRNA with a 3' CCA end + 2 CTP + ATP = a tRNA with a 3' CCACCA end + 3 diphosphate. Catalyzes the addition and repair of the essential 3'-terminal CCA sequence in tRNAs without using a nucleic acid template. Adds these three nucleotides in the order of C, C, and A to the tRNA nucleotide-73, using CTP and ATP as substrates and producing inorganic pyrophosphate. tRNA 3'-terminal CCA addition is required both for tRNA processing and repair. Also involved in tRNA surveillance by mediating tandem CCA addition to generate a CCACCA at the 3' terminus of unstable tRNAs. While stable tRNAs receive only 3'-terminal CCA, unstable tRNAs are marked with CCACCA and rapidly degraded. In Blochmanniella floridana, this protein is CCA-adding enzyme.